The following is a 167-amino-acid chain: Small ribosomal subunit protein uS5 (167 aa).

In terms of domain architecture, S5 DRBM spans 11 to 74 (LQEKLIAVNR…EKARRNMINV (64 aa)).

Belongs to the universal ribosomal protein uS5 family. Part of the 30S ribosomal subunit. Contacts proteins S4 and S8.

Functionally, with S4 and S12 plays an important role in translational accuracy. In terms of biological role, located at the back of the 30S subunit body where it stabilizes the conformation of the head with respect to the body. This Klebsiella pneumoniae subsp. pneumoniae (strain ATCC 700721 / MGH 78578) protein is Small ribosomal subunit protein uS5.